The primary structure comprises 231 residues: MAGKKVLIVYAHQEPKSFNGSLKNVAVDELSRQGCTVTVSDLYAMNLEPRATDKDITGTLSNPEVFNYGVETHEAYKQRSLASDITDEQKKVREADLVIFQFPLYWFSVPAILKGWMDRVLCQGFAFDIPGFYDSGLLQGKLALLSVTTGGTAEMYTKTGVNGDSRYFLWPLQHGTLHFCGFKVLAPQISFAPEIASEEERKGMVAAWSQRLQTIWKEEPIPCTAHWHFGQ.

FAD contacts are provided by residues histidine 12 and phenylalanine 18–serine 21. Residue serine 80 is modified to Phosphoserine. Leucine 104 to phenylalanine 107 contacts FAD. Phenylalanine 127–isoleucine 129 serves as a coordination point for substrate. Residues threonine 148 to glycine 151 and tyrosine 156 contribute to the FAD site. 2 residues coordinate Zn(2+): histidine 174 and histidine 178. Residue glutamate 194 coordinates FAD. Serine 197 is modified (phosphoserine). Arginine 201 contributes to the FAD binding site. Cysteine 223 is a Zn(2+) binding site.

The protein belongs to the NAD(P)H dehydrogenase (quinone) family. As to quaternary structure, homodimer. It depends on Zn(2+) as a cofactor. FAD is required as a cofactor.

It localises to the cytoplasm. The catalysed reaction is 1-(beta-D-ribofuranosyl)-1,4-dihydronicotinamide + a quinone + H(+) = beta-nicotinamide D-riboside + a quinol. Its activity is regulated as follows. Inhibited by melatonin, resveratrol and 5-hydroxytryptamine. Its function is as follows. The enzyme apparently serves as a quinone reductase in connection with conjugation reactions of hydroquinones involved in detoxification pathways as well as in biosynthetic processes such as the vitamin K-dependent gamma-carboxylation of glutamate residues in prothrombin synthesis. The sequence is that of Ribosyldihydronicotinamide dehydrogenase [quinone] (NQO2) from Homo sapiens (Human).